We begin with the raw amino-acid sequence, 154 residues long: 6,7-dimethyl-8-ribityllumazine synthase (154 aa).

5-amino-6-(D-ribitylamino)uracil contacts are provided by residues Phe21, 55–57 (AFE), and 79–81 (CVI). (2S)-2-hydroxy-3-oxobutyl phosphate is bound at residue 84–85 (AT). Catalysis depends on His87, which acts as the Proton donor. A 5-amino-6-(D-ribitylamino)uracil-binding site is contributed by Phe112. Residue Arg126 coordinates (2S)-2-hydroxy-3-oxobutyl phosphate.

This sequence belongs to the DMRL synthase family. Forms an icosahedral capsid composed of 60 subunits, arranged as a dodecamer of pentamers.

The catalysed reaction is (2S)-2-hydroxy-3-oxobutyl phosphate + 5-amino-6-(D-ribitylamino)uracil = 6,7-dimethyl-8-(1-D-ribityl)lumazine + phosphate + 2 H2O + H(+). The protein operates within cofactor biosynthesis; riboflavin biosynthesis; riboflavin from 2-hydroxy-3-oxobutyl phosphate and 5-amino-6-(D-ribitylamino)uracil: step 1/2. Catalyzes the formation of 6,7-dimethyl-8-ribityllumazine by condensation of 5-amino-6-(D-ribitylamino)uracil with 3,4-dihydroxy-2-butanone 4-phosphate. This is the penultimate step in the biosynthesis of riboflavin. This Staphylococcus aureus (strain Mu50 / ATCC 700699) protein is 6,7-dimethyl-8-ribityllumazine synthase.